The chain runs to 628 residues: Set1/Ash2 histone methyltransferase complex subunit ASH2 (628 aa).

At M1 the chain carries N-acetylmethionine. The segment covering 1–18 (MAAAGAGPGQEAGAGPGP) has biased composition (gly residues). The PHD-type; atypical zinc-finger motif lies at 1–66 (MAAAGAGPGQ…SGEAEGGEAN (66 aa)). A disordered region spans residues 1–107 (MAAAGAGPGQ…QAGSVDEENG (107 aa)). Positions 36–65 (AAGAAAPPGEGISAAPTVEPSSGEAEGGEA) are enriched in low complexity. The DNA-binding stretch occupies residues 67-177 (LVDVSGGLET…MCLSALANLT (111 aa)). At S101 the chain carries Phosphoserine. A C4-type zinc finger spans residues 117–150 (CGICTKWFTADTFGIDTSSCLPFMTNYSFHCNVC). Over residues 235–252 (LVKEHPDPGSKDPEEDYP) the composition is skewed to basic and acidic residues. The segment at 235-331 (LVKEHPDPGS…AQRLPPHGYP (97 aa)) is disordered. The span at 270 to 282 (NQKQSSAVSTSGN) shows a compositional bias: polar residues. A compositionally biased stretch (gly residues) spans 283–295 (LNGGIAAGSSGKG). R296 is subject to Asymmetric dimethylarginine; by PRMT1 and PRMT5. S316 carries the post-translational modification Phosphoserine. Positions 316-628 (SDPLFSAQRL…DGRRSPPWEP (313 aa)) are interaction with RBBP5. Residues 360 to 583 (LDCWAGKPIP…VSINFGPCFK (224 aa)) form the B30.2/SPRY domain.

Interacts with HCFC1. Core component of several methyltransferase-containing complexes including MLL1/MLL, MLL2/3 (also named ASCOM complex) and MLL4/WBP7. Each complex is at least composed of ASH2L, RBBP5, WDR5, DPY30, one or more specific histone methyltransferases (KMT2A/MLL1, KMT2D/MLL2, KMT2C/MLL3 and KMT2B/MLL4), and the facultative components PAGR1, BACC1, CHD8, E2F6, HCFC1, HCFC2, HSP70, INO80C, KDM6A, KANSL1, LAS1L, MAX, MCRS1, MEN1, MGA, KAT8/MOF, NCOA6, PAXIP1/PTIP, PELP1, PHF20, PRP31, RING2, RUVB1/TIP49A, RUVB2/TIP49B, SENP3, TAF1, TAF4, TAF6, TAF7, TAF9, TEX10 and alpha- and beta-tubulin. Component of the SET1 complex, at least composed of the catalytic subunit (SETD1A or SETD1B), WDR5, WDR82, RBBP5, ASH2L/ASH2, CXXC1/CFP1, HCFC1 and DPY30. Found in a complex with RBBP5, ASH2L, DPY30, KMT2A, KMT2D and WDR5. Component of a histone methylation complex composed of at least ZNF335, RBBP5, ASH2L and WDR5; the complex may have histone H3-specific methyltransferase activity, however does not have specificity for 'Lys-4' of histone H3. Within the complex, interacts with ZNF335. Interacts with RBBP5. Components of this complex may associate with components of a nuclear receptor-mediated transcription complex to form a complex at least composed of ZNF335, HCFC1, CCAR2, EMSY, MKI67, RBBP5, ASH2L and WDR5. Within this complex also interacts with CCAR2 and EMSY. Interacts with DPY30. Interacts with SETD1A and SETD1B. Post-translationally, both monomethylated and dimethylated on arginine residues in the C-terminus. Arg-296 is the major site. Methylation is not required for nuclear localization, nor for MLL complex integrity or maintenance of global histone H3K4me3 levels. As to expression, ubiquitously expressed. Predominantly expressed in adult heart and testis and fetal lung and liver, with barely detectable expression in adult lung, liver, kidney, prostate, and peripheral leukocytes.

Its subcellular location is the nucleus. In terms of biological role, transcriptional regulator. Component or associated component of some histone methyltransferase complexes which regulates transcription through recruitment of those complexes to gene promoters. Component of the Set1/Ash2 histone methyltransferase (HMT) complex, a complex that specifically methylates 'Lys-4' of histone H3, but not if the neighboring 'Lys-9' residue is already methylated. As part of the MLL1/MLL complex it is involved in methylation and dimethylation at 'Lys-4' of histone H3. May play a role in hematopoiesis. In association with RBBP5 and WDR5, stimulates the histone methyltransferase activities of KMT2A, KMT2B, KMT2C, KMT2D, SETD1A and SETD1B. The sequence is that of Set1/Ash2 histone methyltransferase complex subunit ASH2 (ASH2L) from Homo sapiens (Human).